The chain runs to 222 residues: Cyclin-dependent kinase inhibitor 3 (222 aa).

Residues 68–101 form a disordered region; it reads KPSSLIEPKQPPRVHRSGIKESGSRSRVDSVNSV. Residues 85 to 95 are compositionally biased toward basic and acidic residues; sequence GIKESGSRSRV.

It belongs to the CDI family. ICK/KRP subfamily. As to quaternary structure, specifically interacts with CDKA-1, but not with CDKB1-1.

The protein resides in the nucleus. Its subcellular location is the nucleoplasm. Binds and inhibits CYCD2-1/CDKA-1 complex kinase activity. May target specifically CDKA-1. This is Cyclin-dependent kinase inhibitor 3 (KRP3) from Arabidopsis thaliana (Mouse-ear cress).